A 289-amino-acid polypeptide reads, in one-letter code: Protease HtpX homolog (289 aa).

2 helical membrane passes run 9 to 29 (TGVLMAFLTALLVGIGYLIGG) and 31 to 51 (GGMIIAFTIALFMNLISYWFS). H133 is a binding site for Zn(2+). E134 is a catalytic residue. Zn(2+) is bound at residue H137. 2 helical membrane-spanning segments follow: residues 143-163 (TLIQTLAAVLAGAIMILVDFA) and 182-202 (IGLILAIVLAPLAATLIQLAI). Position 207 (E207) interacts with Zn(2+).

This sequence belongs to the peptidase M48B family. The cofactor is Zn(2+).

Its subcellular location is the cell membrane. This Pyrococcus abyssi (strain GE5 / Orsay) protein is Protease HtpX homolog.